We begin with the raw amino-acid sequence, 142 residues long: Large ribosomal subunit protein uL13 (142 aa).

The protein belongs to the universal ribosomal protein uL13 family. As to quaternary structure, part of the 50S ribosomal subunit.

In terms of biological role, this protein is one of the early assembly proteins of the 50S ribosomal subunit, although it is not seen to bind rRNA by itself. It is important during the early stages of 50S assembly. The sequence is that of Large ribosomal subunit protein uL13 from Psychrobacter cryohalolentis (strain ATCC BAA-1226 / DSM 17306 / VKM B-2378 / K5).